Consider the following 486-residue polypeptide: Citrate synthase 3, mitochondrial (486 aa).

The transit peptide at 1-23 (MVQRLLPGAHICRRSFNSSAIIK) directs the protein to the mitochondrion. Active-site residues include H315, H361, and D419. Positions 484-486 (NKL) match the Microbody targeting signal motif.

Belongs to the citrate synthase family.

The protein resides in the mitochondrion. The enzyme catalyses oxaloacetate + acetyl-CoA + H2O = citrate + CoA + H(+). It functions in the pathway carbohydrate metabolism; tricarboxylic acid cycle; isocitrate from oxaloacetate: step 1/2. Its function is as follows. Dual specificity mitochondrial citrate and methylcitrate synthase with similar catalytic efficiency with both acetyl-CoA and propionyl-CoA. The chain is Citrate synthase 3, mitochondrial from Saccharomyces cerevisiae (strain ATCC 204508 / S288c) (Baker's yeast).